Here is a 510-residue protein sequence, read N- to C-terminus: Glycerol kinase (510 aa).

Thr-12 lines the ADP pocket. Thr-12, Thr-13, and Ser-14 together coordinate ATP. Thr-12 lines the sn-glycerol 3-phosphate pocket. Arg-16 serves as a coordination point for ADP. Sn-glycerol 3-phosphate contacts are provided by Arg-82, Glu-83, and Tyr-134. Residues Arg-82, Glu-83, and Tyr-134 each contribute to the glycerol site. The residue at position 230 (His-230) is a Phosphohistidine; by HPr. Asp-244 serves as a coordination point for sn-glycerol 3-phosphate. Glycerol-binding residues include Asp-244 and Gln-245. Residues Thr-266 and Gly-309 each contribute to the ADP site. Thr-266, Gly-309, Gln-313, and Gly-410 together coordinate ATP. The ADP site is built by Gly-410 and Asn-414.

Belongs to the FGGY kinase family. As to quaternary structure, homotetramer and homodimer (in equilibrium). The phosphoenolpyruvate-dependent sugar phosphotransferase system (PTS), including enzyme I, and histidine-containing protein (HPr) are required for the phosphorylation, which leads to the activation of the enzyme.

It carries out the reaction glycerol + ATP = sn-glycerol 3-phosphate + ADP + H(+). The protein operates within polyol metabolism; glycerol degradation via glycerol kinase pathway; sn-glycerol 3-phosphate from glycerol: step 1/1. Activated by phosphorylation and inhibited by fructose 1,6-bisphosphate (FBP). Key enzyme in the regulation of glycerol uptake and metabolism. Catalyzes the phosphorylation of glycerol to yield sn-glycerol 3-phosphate. In Bacillus cereus (strain ATCC 10987 / NRS 248), this protein is Glycerol kinase.